We begin with the raw amino-acid sequence, 327 residues long: Porphobilinogen deaminase (327 aa).

An S-(dipyrrolylmethanemethyl)cysteine modification is found at cysteine 250.

This sequence belongs to the HMBS family. In terms of assembly, monomer. Dipyrromethane is required as a cofactor.

The enzyme catalyses 4 porphobilinogen + H2O = hydroxymethylbilane + 4 NH4(+). Its pathway is porphyrin-containing compound metabolism; protoporphyrin-IX biosynthesis; coproporphyrinogen-III from 5-aminolevulinate: step 2/4. Its function is as follows. Tetrapolymerization of the monopyrrole PBG into the hydroxymethylbilane pre-uroporphyrinogen in several discrete steps. The polypeptide is Porphobilinogen deaminase (Paraburkholderia phymatum (strain DSM 17167 / CIP 108236 / LMG 21445 / STM815) (Burkholderia phymatum)).